The primary structure comprises 396 residues: Ribosomal RNA large subunit methyltransferase I (396 aa).

Residues 2–81 (SVRLVLAKGR…ESIDIAFFTR (80 aa)) enclose the PUA domain.

The protein belongs to the methyltransferase superfamily. RlmI family.

It localises to the cytoplasm. The enzyme catalyses cytidine(1962) in 23S rRNA + S-adenosyl-L-methionine = 5-methylcytidine(1962) in 23S rRNA + S-adenosyl-L-homocysteine + H(+). Functionally, specifically methylates the cytosine at position 1962 (m5C1962) of 23S rRNA. The chain is Ribosomal RNA large subunit methyltransferase I from Escherichia coli O127:H6 (strain E2348/69 / EPEC).